Here is a 149-residue protein sequence, read N- to C-terminus: Putative pre-16S rRNA nuclease (149 aa).

It belongs to the YqgF nuclease family.

Its subcellular location is the cytoplasm. Could be a nuclease involved in processing of the 5'-end of pre-16S rRNA. The sequence is that of Putative pre-16S rRNA nuclease from Pseudoalteromonas translucida (strain TAC 125).